The following is a 426-amino-acid chain: MEFQDHFSQEMVLHQQQQQQQQQQNAVLRSMLPESPHHDARKSPPTWLNTSLLRQQHSQFGNASSPSSAAAAAAVAGGNNFLHLQTSNSDSSNSNQWLSPTAAAGGGSNGGGSGHNDELSESMNFAKKMSQQHSGGGEENNNNNNNNNNNNNEEENSWEREKCKADILNHPLYDQLLSAHVSCLRIATPVDQLPRIDAQLAQSQNVVAKYSVLGQGQPPLDDKDLDQFMTHYVLLLSSFKEQLQQHVRVHAMEAVMACWELEQSLQSLTGVAPGEGTGATMSDDDDDQADSDTNFLDGGFDGPDSMGFGPLVPTESERSLMERVRQELKHELKQGYKEKIVDIREEILRKRRAGKLPGDTTSVLKAWWQSHSKWPYPTEEDKARLVQETGLQLKQINNWFINQRKRNWHSNPSTSSSQKSQTQECR.

Disordered regions lie at residues 1-26 (MEFQ…QQNA), 85-158 (QTSN…ENSW), and 270-290 (GVAP…DQAD). The span at 15–24 (QQQQQQQQQQ) shows a compositional bias: low complexity. The segment covering 104 to 114 (AGGGSNGGGSG) has biased composition (gly residues). Low complexity predominate over residues 139–151 (ENNNNNNNNNNNN). Residues 327–347 (ELKHELKQGYKEKIVDIREEI) form the ELK domain. Positions 348–411 (LRKRRAGKLP…NQRKRNWHSN (64 aa)) form a DNA-binding region, homeobox; TALE-type. The segment at 406–426 (RNWHSNPSTSSSQKSQTQECR) is disordered. Over residues 413–426 (STSSSQKSQTQECR) the composition is skewed to low complexity.

Belongs to the TALE/KNOX homeobox family. Ubiquitously expressed in the mature plant.

It localises to the nucleus. Functionally, may have a role to play in formative events in ovule and embryo morphogenesis. The polypeptide is Homeobox protein knotted-1-like LET12 (LET12) (Solanum lycopersicum (Tomato)).